Reading from the N-terminus, the 323-residue chain is MIFSTLEHILTHISFSVVSIVISIHLITLFVNQIVGFYDSSKKGMIITFLCITGLLITRWFFSGHLPFSDLYESLIFLSWGFSIFYMVPRFKKQKNDLSTIIAPSVIFTQGFATSGLLTEMHQSVILVPALQSHWLMMHVSMMILGYAALLCGSLLSVAILVITFQELIPILGKSKRLSFLYESFDYAEIKYINMNERNNVLRKTSFSSYRNYYRYQFIQQLDRWGYRIISLGFIFLTIGILSGAVWANEAWGSYWNWDPKETWAFITWTIFAIYLHSRKNKKLEGLNSSIVASIGFLIIWICYFGVNLLGIGLHNYGSFTSN.

Transmembrane regions (helical) follow at residues 17 to 37 (VVSI…IVGF), 44 to 64 (GMII…FFSG), 68 to 88 (FSDL…FYMV), 98 to 118 (LSTI…SGLL), 143 to 163 (MILG…ILVI), 229 to 249 (IISL…VWAN), 262 to 279 (ETWA…LHSR), and 291 to 311 (IVAS…NLLG).

It belongs to the CcmF/CycK/Ccl1/NrfE/CcsA family. As to quaternary structure, may interact with Ccs1.

Its subcellular location is the plastid. It localises to the chloroplast thylakoid membrane. Required during biogenesis of c-type cytochromes (cytochrome c6 and cytochrome f) at the step of heme attachment. The protein is Cytochrome c biogenesis protein CcsA of Lotus japonicus (Lotus corniculatus var. japonicus).